The primary structure comprises 1288 residues: Disease resistance protein RRS1 (1288 aa).

The 142-residue stretch at 5-146 folds into the TIR domain; it reads EKDEEFVCIS…EIVRDVYETH (142 aa). Residues 25–26 are important for interaction with RPS4; that stretch reads SH. Residues 170–421 form the NB-ARC domain; the sequence is IGIRCVGIWG…LLEGCGFFPH (252 aa). Position 179-186 (179-186) interacts with ATP; it reads GMPGIGKT. LRR repeat units follow at residues 498-522, 535-553, 554-575, 577-598, 621-646, 665-688, 697-720, 740-764, 766-791, 792-807, 808-829, and 830-852; these read SEEI…AFKN, NPEV…HSLP, NELR…NFDP, HLVE…TKNL, AENL…RLLR, PPNI…TVKP, LTEI…NSSC, LPNM…SIQG, PRFL…SLEI, LNAH…NMAN, LEFL…QGFP, and RNLK…PLSL. A Nuclear localization signal motif is present at residues 986–1003; that stretch reads RKFHCWAPWQVVPKVRKD. Residues 1202 to 1270 constitute a DNA-binding region (WRKY); the sequence is IPAIDEGDLW…YLSEHNHPRP (69 aa). The tract at residues 1267 to 1288 is disordered; that stretch reads HPRPTKRKALADSTRSTSSSIC. Polar residues predominate over residues 1279 to 1288; sequence STRSTSSSIC.

Belongs to the disease resistance TIR-NB-LRR family. In terms of assembly, interacts with PopP2, a R.solanacearum type III effector. Interacts with RPS4.

Its subcellular location is the nucleus. It localises to the cytoplasm. Its function is as follows. Transcription factor. Interacts specifically with the W box (5'-(T)TGAC[CT]-3'), a frequently occurring elicitor-responsive cis-acting element. Also acts as a disease resistance protein involved in resistance to fungal and bacterial pathogens, including R.solanacearum, P.syringae pv. tomato and C.higginsianum. Heterodimerization with RPS4 is required to form a functional complex to recognize AvrRps4 and PopP2. Contributes to temperature-conditioned RPS4 auto-immunity. The sequence is that of Disease resistance protein RRS1 from Arabidopsis thaliana (Mouse-ear cress).